The chain runs to 96 residues: Protein Vpr (96 aa).

The tract at residues 1–42 is homooligomerization; sequence MEQAPADQGPQREPYNEWALELLEELKSEAVRHFPRIWLHSL. Ser79, Ser94, and Ser96 each carry phosphoserine; by host.

It belongs to the HIV-1 VPR protein family. In terms of assembly, homooligomer, may form homodimer. Interacts with p6-gag region of the Pr55 Gag precursor protein through a (Leu-X-X)4 motif near the C-terminus of the P6gag protein. Interacts with host UNG. May interact with host RAD23A/HHR23A. Interacts with host VPRBP/DCAF1, leading to hijack the CUL4A-RBX1-DDB1-DCAF1/VPRBP complex, mediating ubiquitination of host proteins such as TERT and ZGPAT and arrest of the cell cycle in G2 phase. Phosphorylated on several residues by host. These phosphorylations regulate VPR activity for the nuclear import of the HIV-1 pre-integration complex.

Its subcellular location is the virion. The protein localises to the host nucleus. The protein resides in the host extracellular space. Functionally, during virus replication, may deplete host UNG protein, and incude G2-M cell cycle arrest. Acts by targeting specific host proteins for degradation by the 26S proteasome, through association with the cellular CUL4A-DDB1 E3 ligase complex by direct interaction with host VPRPB/DCAF-1. Cell cycle arrest reportedly occurs within hours of infection and is not blocked by antiviral agents, suggesting that it is initiated by the VPR carried into the virion. Additionally, VPR induces apoptosis in a cell cycle dependent manner suggesting that these two effects are mechanistically linked. Detected in the serum and cerebrospinal fluid of AIDS patient, VPR may also induce cell death to bystander cells. During virus entry, plays a role in the transport of the viral pre-integration (PIC) complex to the host nucleus. This function is crucial for viral infection of non-dividing macrophages. May act directly at the nuclear pore complex, by binding nucleoporins phenylalanine-glycine (FG)-repeat regions. The chain is Protein Vpr from Human immunodeficiency virus type 1 group M subtype D (isolate ELI) (HIV-1).